The chain runs to 561 residues: Arginine--tRNA ligase (561 aa).

A 'HIGH' region motif is present at residues 123–133; the sequence is PNIAKDMHVGH.

Belongs to the class-I aminoacyl-tRNA synthetase family. In terms of assembly, monomer.

It localises to the cytoplasm. The catalysed reaction is tRNA(Arg) + L-arginine + ATP = L-arginyl-tRNA(Arg) + AMP + diphosphate. This chain is Arginine--tRNA ligase (argS), found in Chlamydia pneumoniae (Chlamydophila pneumoniae).